Here is a 221-residue protein sequence, read N- to C-terminus: uncharacterized protein (221 aa).

The disordered stretch occupies residues 1 to 22 (MGLDNFTAPSTGTTPAGSPFLR). Residues 7–16 (TAPSTGTTPA) are compositionally biased toward polar residues.

This sequence belongs to the IIV-6 259R family.

This is an uncharacterized protein from Invertebrate iridescent virus 3 (IIV-3).